The sequence spans 443 residues: Xaa-Pro dipeptidase (443 aa).

Residues Asp-246, Asp-257, His-339, Glu-384, and Glu-423 each contribute to the Mn(2+) site.

The protein belongs to the peptidase M24B family. Bacterial-type prolidase subfamily. Requires Mn(2+) as cofactor.

It carries out the reaction Xaa-L-Pro dipeptide + H2O = an L-alpha-amino acid + L-proline. Functionally, splits dipeptides with a prolyl residue in the C-terminal position. This is Xaa-Pro dipeptidase from Yersinia pseudotuberculosis serotype I (strain IP32953).